The primary structure comprises 359 residues: ATP-dependent kinase YFH7 (359 aa).

ATP is bound at residue 31 to 39 (GPPGSGKST).

It belongs to the YFH7 family.

ATP-dependent kinase that could be involved in endoplasmic reticulum membrane assembly. In Vanderwaltozyma polyspora (strain ATCC 22028 / DSM 70294 / BCRC 21397 / CBS 2163 / NBRC 10782 / NRRL Y-8283 / UCD 57-17) (Kluyveromyces polysporus), this protein is ATP-dependent kinase YFH7 (YFH7).